The sequence spans 613 residues: Glutamyl-tRNA(Gln) amidotransferase subunit E (613 aa).

This sequence belongs to the GatB/GatE family. GatE subfamily. Heterodimer of GatD and GatE.

It catalyses the reaction L-glutamyl-tRNA(Gln) + L-glutamine + ATP + H2O = L-glutaminyl-tRNA(Gln) + L-glutamate + ADP + phosphate + H(+). Functionally, allows the formation of correctly charged Gln-tRNA(Gln) through the transamidation of misacylated Glu-tRNA(Gln) in organisms which lack glutaminyl-tRNA synthetase. The reaction takes place in the presence of glutamine and ATP through an activated gamma-phospho-Glu-tRNA(Gln). The GatDE system is specific for glutamate and does not act on aspartate. The chain is Glutamyl-tRNA(Gln) amidotransferase subunit E from Archaeoglobus fulgidus (strain ATCC 49558 / DSM 4304 / JCM 9628 / NBRC 100126 / VC-16).